The sequence spans 455 residues: Golgi pH regulator A (455 aa).

5 consecutive transmembrane segments (helical) span residues 5-25 (IDSS…WLFF), 46-66 (VTFA…LGVL), 79-99 (LCVI…YFIV), 114-134 (CLLW…FPIL), and 150-170 (VGVI…VNCP). N-linked (GlcNAc...) asparagine glycosylation is found at Asn-180 and Asn-243. The next 4 membrane-spanning stretches (helical) occupy residues 290 to 310 (GYFF…NIVF), 343 to 363 (ISFI…LITL), 378 to 398 (VIVL…VLLI), and 425 to 445 (WFDV…YLAH).

This sequence belongs to the Golgi pH regulator (TC 1.A.38) family. Homotrimer. Interacts with RABL3; the interaction stabilizes GPR89A. In terms of tissue distribution, ubiquitous.

It is found in the golgi apparatus membrane. It catalyses the reaction iodide(out) = iodide(in). The catalysed reaction is chloride(in) = chloride(out). It carries out the reaction bromide(in) = bromide(out). The enzyme catalyses fluoride(in) = fluoride(out). Its function is as follows. Voltage-gated channel that enables the transfer of monoatomic anions such as iodide, chloride, bromide and fluoride which may function in counter-ion conductance and participates in Golgi acidification. Plays a role in lymphocyte development, probably by acting as a RABL3 effector in hematopoietic cells. This Homo sapiens (Human) protein is Golgi pH regulator A.